Here is a 359-residue protein sequence, read N- to C-terminus: tRNA-specific 2-thiouridylase MnmA (359 aa).

Residues 9 to 16 (GISGGVDS) and methionine 35 contribute to the ATP site. The tract at residues 95-97 (NPD) is interaction with target base in tRNA. Cysteine 100 acts as the Nucleophile in catalysis. Cysteine 100 and cysteine 197 are joined by a disulfide. Glycine 124 is an ATP binding site. An interaction with tRNA region spans residues 147–149 (KDQ). The active-site Cysteine persulfide intermediate is cysteine 197. An interaction with tRNA region spans residues 309–310 (RY).

The protein belongs to the MnmA/TRMU family.

The protein localises to the cytoplasm. The enzyme catalyses S-sulfanyl-L-cysteinyl-[protein] + uridine(34) in tRNA + AH2 + ATP = 2-thiouridine(34) in tRNA + L-cysteinyl-[protein] + A + AMP + diphosphate + H(+). Its function is as follows. Catalyzes the 2-thiolation of uridine at the wobble position (U34) of tRNA, leading to the formation of s(2)U34. The protein is tRNA-specific 2-thiouridylase MnmA of Francisella tularensis subsp. holarctica (strain FTNF002-00 / FTA).